The primary structure comprises 578 residues: Acyl-CoA ligase AKT1 (578 aa).

Residues 210–218, 350–355, aspartate 438, arginine 457, and lysine 554 contribute to the ATP site; these read SSGTSGAQK and QCYGAT. The segment at 281-350 is SBD1; that stretch reads DVEDLLSIVE…RHHPTWKTKQ (70 aa). The segment at 351 to 413 is SBD2; that stretch reads CYGATEAGTA…VSSPSLAIGY (63 aa). Positions 576–578 match the Peroxisomal targeting signal type 1 motif; that stretch reads SKI.

The protein resides in the peroxisome. It functions in the pathway mycotoxin biosynthesis. In terms of biological role, acyl-CoA ligase; part of the gene clusters that mediate the biosynthesis of the host-selective toxins (HSTs) AK-toxins responsible for Japanese pear black spot disease by the Japanese pear pathotype. AK-toxins are esters of 9,10-epoxy 8-hydroxy 9-methyldecatrienoic acid (EDA). On cellular level, AK-toxins affect plasma membrane of susceptible cells and cause a sudden increase in loss of K(+) after a few minutes of toxin treatment. The acyl-CoA ligase AKT1, the hydrolase AKT2 and enoyl-CoA hydratase AKT3 are all involved in the biosynthesis of the AK-, AF- and ACT-toxin common 9,10-epoxy-8-hydroxy-9-methyl-decatrienoic acid (EDA) structural moiety. Part of the EDA biosynthesis occurs in the peroxisome since these 3 enzymes are localized in peroxisomes. The exact roles of the 3 enzymes, as well as of additional AK-toxin clusters enzymes, including AKT4, AKT6 and AKTS1, have still to be elucidated. The Cytochrome P450 monooxygenase AKT7 on the other side functions to limit production of EDA and AK-toxin, probably via the catalysis of a side reaction of EDA or its precursor. The sequence is that of Acyl-CoA ligase AKT1 from Alternaria alternata (Alternaria rot fungus).